A 129-amino-acid chain; its full sequence is Replication initiation control protein YabA (129 aa).

Zn(2+) is bound by residues His-103, Cys-105, Cys-119, and Cys-122.

The protein belongs to the YabA family. As to quaternary structure, homotetramer. Interacts with both DnaA and DnaN, acting as a bridge between these two proteins. Zn(2+) serves as cofactor.

Its subcellular location is the cytoplasm. The protein localises to the nucleoid. In terms of biological role, involved in control of chromosome replication initiation. Inhibits the cooperative binding of DnaA to the oriC region, thus negatively regulating initiation of chromosome replication. Inhibits the ability of DnaA-ATP to form a helix on DNA; does not disassemble preformed DnaA-DNA helices. Decreases the residence time of DnaA on the chromosome at its binding sites (oriC, replication forks and promoter-binding sites). Tethers DnaA to the replication machinery via the DNA polymerase beta sliding clamp subunit (dnaN). Associates with oriC and other DnaA targets on the chromosome in a DnaA-dependent manner. The protein is Replication initiation control protein YabA of Listeria welshimeri serovar 6b (strain ATCC 35897 / DSM 20650 / CCUG 15529 / CIP 8149 / NCTC 11857 / SLCC 5334 / V8).